The sequence spans 127 residues: Small ribosomal subunit protein uS11 (127 aa).

Belongs to the universal ribosomal protein uS11 family. Part of the 30S ribosomal subunit. Interacts with proteins S7 and S18. Binds to IF-3.

Functionally, located on the platform of the 30S subunit, it bridges several disparate RNA helices of the 16S rRNA. Forms part of the Shine-Dalgarno cleft in the 70S ribosome. This is Small ribosomal subunit protein uS11 from Streptococcus pyogenes serotype M49 (strain NZ131).